The chain runs to 494 residues: Arp2/3 complex-activating protein rickA (494 aa).

A disordered region spans residues 312–494 (PLENNIPPPP…RNSQKPSFVR (183 aa)). The span at 317 to 357 (IPPPPPPPPPLPDNNIPPPPPPPPPLPDNNIPPPPPPPPMA) shows a compositional bias: pro residues. The WH2 domain maps to 383–400 (DTSDLMREIAGPKKLKKV). The tract at residues 421–454 (VNKPSGLESIFARRVAIEMSDSSSSESDSGNWSD) is central and acidic domains. The segment covering 440–456 (SDSSSSESDSGNWSDVS) has biased composition (low complexity). The segment covering 477 to 494 (THAQKINNRNSQKPSFVR) has biased composition (polar residues).

It localises to the cell surface. Functionally, recruits and activates the Arp2/3 complex, which in turn leads to actin polymerization, promoting Rickettsia motility during infection. The chain is Arp2/3 complex-activating protein rickA (rickA) from Rickettsia rickettsii.